We begin with the raw amino-acid sequence, 178 residues long: Acireductone dioxygenase (178 aa).

Positions 82, 84, 88, and 127 each coordinate Fe(2+). Ni(2+) contacts are provided by histidine 82, histidine 84, glutamate 88, and histidine 127. Serine 157 bears the Phosphoserine mark.

It belongs to the acireductone dioxygenase (ARD) family. Requires Fe(2+) as cofactor. The cofactor is Ni(2+).

The protein localises to the cytoplasm. Its subcellular location is the nucleus. The catalysed reaction is 1,2-dihydroxy-5-(methylsulfanyl)pent-1-en-3-one + O2 = 4-methylsulfanyl-2-oxobutanoate + formate + 2 H(+). The enzyme catalyses 1,2-dihydroxy-5-(methylsulfanyl)pent-1-en-3-one + O2 = 3-(methylsulfanyl)propanoate + CO + formate + 2 H(+). The protein operates within amino-acid biosynthesis; L-methionine biosynthesis via salvage pathway; L-methionine from S-methyl-5-thio-alpha-D-ribose 1-phosphate: step 5/6. In terms of biological role, catalyzes 2 different reactions between oxygen and the acireductone 1,2-dihydroxy-3-keto-5-methylthiopentene (DHK-MTPene) depending upon the metal bound in the active site. Fe-containing acireductone dioxygenase (Fe-ARD) produces formate and 2-keto-4-methylthiobutyrate (KMTB), the alpha-ketoacid precursor of methionine in the methionine recycle pathway. Ni-containing acireductone dioxygenase (Ni-ARD) produces methylthiopropionate, carbon monoxide and formate, and does not lie on the methionine recycle pathway. This chain is Acireductone dioxygenase (adi1), found in Schizosaccharomyces pombe (strain 972 / ATCC 24843) (Fission yeast).